The following is a 25-amino-acid chain: Caerin 1.1 (25 aa).

Leu-25 bears the Leucine amide mark.

In terms of tissue distribution, expressed by the skin dorsal glands.

The protein localises to the secreted. Antibacterial peptide with wide spectrum of activity. Active against the Gram-positive bacteria B.cereus (MIC=50 ug/ml), E.faecalis (MIC=25 ug/ml), L.lactis (MIC=1.5 ug/ml), L.innocua (MIC=25 ug/ml), S.aureus (MIC=3 ug/ml), S.epidermidis (MIC=12 ug/ml) and S.uberis (MIC=12 ug/ml), and against the Gram-negative bacteria E.coli (MIC=100 ug/ml) and P.multocida (MIC=25 ug/ml). In Litoria peronii (Emerald spotted tree frog), this protein is Caerin 1.1.